Reading from the N-terminus, the 169-residue chain is Probable phospholipid hydroperoxide glutathione peroxidase (169 aa).

Residue Cys43 is part of the active site.

The protein belongs to the glutathione peroxidase family. In terms of assembly, monomer. Has a tendency to form higher mass oligomers. Interacts with FUNDC1; this interaction promotes GPX4 recruitment into mitochondria through TOM/TIM complex where it is degraded by mitophagy.

The protein resides in the cytoplasm. The enzyme catalyses a hydroperoxy polyunsaturated fatty acid + 2 glutathione = a hydroxy polyunsaturated fatty acid + glutathione disulfide + H2O. Functionally, protects cells and enzymes from oxidative damage, by catalyzing the reduction of hydrogen peroxide, lipid peroxides and organic hydroperoxide, by glutathione. This chain is Probable phospholipid hydroperoxide glutathione peroxidase (GPXle-1), found in Solanum lycopersicum (Tomato).